Consider the following 174-residue polypeptide: MTERPRDCRPVVRRARTSDVPAIKQLVDTYAGKILLEKNLVTLYEAVQEFWVAEHPDLYGKVVGCGALHVLWSDLGEIRTVAVDPAMTGHGIGHAIVDRLLQVARDLQLQRVFVLTFETEFFARHGFTEIEGTPVTAEVFDEMCRSYDIGVAEFLDLSYVKPNILGNSRMLLVL.

An N-acetyltransferase domain is found at 10-148; the sequence is PVVRRARTSD…VFDEMCRSYD (139 aa).

The protein belongs to the acetyltransferase family. As to quaternary structure, homodimer and homotetramer.

The catalysed reaction is L-glutamate + acetyl-CoA = N-acetyl-L-glutamate + CoA + H(+). It participates in amino-acid biosynthesis; L-arginine biosynthesis; N(2)-acetyl-L-ornithine from L-glutamate: step 1/4. Its activity is regulated as follows. Inhibited by L-arginine. Catalyzes the conversion of L-glutamate to alpha-N-acetyl-L-glutamate. L-glutamine is a significantly better substrate compared to L-glutamate. The chain is Amino-acid acetyltransferase (argA) from Mycobacterium tuberculosis (strain ATCC 25618 / H37Rv).